Reading from the N-terminus, the 199-residue chain is FMN-dependent NADH:quinone oxidoreductase (199 aa).

FMN is bound at residue Ser-10.

It belongs to the azoreductase type 1 family. As to quaternary structure, homodimer. FMN serves as cofactor.

It catalyses the reaction 2 a quinone + NADH + H(+) = 2 a 1,4-benzosemiquinone + NAD(+). The enzyme catalyses N,N-dimethyl-1,4-phenylenediamine + anthranilate + 2 NAD(+) = 2-(4-dimethylaminophenyl)diazenylbenzoate + 2 NADH + 2 H(+). In terms of biological role, quinone reductase that provides resistance to thiol-specific stress caused by electrophilic quinones. Functionally, also exhibits azoreductase activity. Catalyzes the reductive cleavage of the azo bond in aromatic azo compounds to the corresponding amines. The chain is FMN-dependent NADH:quinone oxidoreductase from Cellvibrio japonicus (strain Ueda107) (Pseudomonas fluorescens subsp. cellulosa).